The primary structure comprises 473 residues: Photosystem II CP43 reaction center protein (473 aa).

Positions Met1–Glu14 are excised as a propeptide. Thr15 bears the N-acetylthreonine mark. The residue at position 15 (Thr15) is a Phosphothreonine. 5 helical membrane-spanning segments follow: residues Leu69 to Ala93, Leu134 to Ser155, Lys178 to Thr200, Lys255 to Ser275, and Trp291 to Ala312. Glu367 is a binding site for [CaMn4O5] cluster. Residues Arg447–Pro471 form a helical membrane-spanning segment.

Belongs to the PsbB/PsbC family. PsbC subfamily. As to quaternary structure, PSII is composed of 1 copy each of membrane proteins PsbA, PsbB, PsbC, PsbD, PsbE, PsbF, PsbH, PsbI, PsbJ, PsbK, PsbL, PsbM, PsbT, PsbX, PsbY, PsbZ, Psb30/Ycf12, at least 3 peripheral proteins of the oxygen-evolving complex and a large number of cofactors. It forms dimeric complexes. The cofactor is Binds multiple chlorophylls and provides some of the ligands for the Ca-4Mn-5O cluster of the oxygen-evolving complex. It may also provide a ligand for a Cl- that is required for oxygen evolution. PSII binds additional chlorophylls, carotenoids and specific lipids..

The protein localises to the plastid. Its subcellular location is the chloroplast thylakoid membrane. One of the components of the core complex of photosystem II (PSII). It binds chlorophyll and helps catalyze the primary light-induced photochemical processes of PSII. PSII is a light-driven water:plastoquinone oxidoreductase, using light energy to abstract electrons from H(2)O, generating O(2) and a proton gradient subsequently used for ATP formation. This is Photosystem II CP43 reaction center protein from Cycas taitungensis (Prince sago).